The chain runs to 115 residues: Large ribosomal subunit protein bL20 (115 aa).

It belongs to the bacterial ribosomal protein bL20 family.

Binds directly to 23S ribosomal RNA and is necessary for the in vitro assembly process of the 50S ribosomal subunit. It is not involved in the protein synthesizing functions of that subunit. In Chlorobaculum parvum (strain DSM 263 / NCIMB 8327) (Chlorobium vibrioforme subsp. thiosulfatophilum), this protein is Large ribosomal subunit protein bL20.